We begin with the raw amino-acid sequence, 319 residues long: Probable NAD(P)H-dependent D-xylose reductase xyl1 (319 aa).

The active-site Proton donor is the tyrosine 50. Histidine 112 serves as a coordination point for substrate. Residues 166–167 (SN), 215–224 (SSFGPLSFLE), and 271–281 (KSNNPARLLQN) contribute to the NAD(+) site.

This sequence belongs to the aldo/keto reductase family.

It carries out the reaction xylitol + NAD(+) = D-xylose + NADH + H(+). The enzyme catalyses xylitol + NADP(+) = D-xylose + NADPH + H(+). The protein operates within carbohydrate metabolism; D-xylose degradation. Functionally, catalyzes the initial reaction in the xylose utilization pathway by reducing D-xylose into xylitol. Xylose is a major component of hemicelluloses such as xylan. Most fungi utilize D-xylose via three enzymatic reactions, xylose reductase (XR), xylitol dehydrogenase (XDH), and xylulokinase, to form xylulose 5-phosphate, which enters pentose phosphate pathway. This Emericella nidulans (strain FGSC A4 / ATCC 38163 / CBS 112.46 / NRRL 194 / M139) (Aspergillus nidulans) protein is Probable NAD(P)H-dependent D-xylose reductase xyl1 (xyl1).